A 540-amino-acid polypeptide reads, in one-letter code: Zona pellucida sperm-binding protein 4 (540 aa).

Residues 1–18 (MWLLRCVLLCVSLSLAVS) form the signal peptide. Over 19–505 (GQHKPEAPDY…EKLRVPVDSK (487 aa)) the chain is Extracellular. N-linked (GlcNAc...) asparagine glycosylation is present at N69. The P-type domain maps to 141-183 (DWCDSIPARDRLPCAPSPISRGDCEGLGCCYSSEEVNSCYYGN). One can recognise a ZP domain in the interval 188–466 (HCTREGHFSI…VTCPDLSRRR (279 aa)). Residues N202, N219, and N267 are each glycosylated (N-linked (GlcNAc...) asparagine). O-linked (GalNAc...) threonine glycosylation is present at T302. Residues C367 and C442 are joined by a disulfide bond. Residues 463 to 540 (SRRRNFDNSS…QKSCPDQMCQ (78 aa)) constitute a propeptide, removed in mature form. N470 and N474 each carry an N-linked (GlcNAc...) asparagine glycan. The chain crosses the membrane as a helical span at residues 506-526 (VLWVAGLSGTLILGALLVSYL). Residues 527-540 (AVKKQKSCPDQMCQ) are Cytoplasmic-facing.

The protein belongs to the ZP domain family. ZPB subfamily. Post-translationally, proteolytically cleaved before the transmembrane segment to yield the secreted ectodomain incorporated in the zona pellucida. In terms of tissue distribution, expressed in oocytes.

The protein localises to the zona pellucida. The protein resides in the cell membrane. Component of the zona pellucida, an extracellular matrix surrounding oocytes which mediates sperm binding, induction of the acrosome reaction and prevents post-fertilization polyspermy. The zona pellucida is composed of 3 to 4 glycoproteins, ZP1, ZP2, ZP3, and ZP4. ZP4 may act as a sperm receptor. This is Zona pellucida sperm-binding protein 4 (ZP4) from Homo sapiens (Human).